The primary structure comprises 283 residues: Pantothenate synthetase (283 aa).

30–37 provides a ligand contact to ATP; that stretch reads MGYLHEGH. The Proton donor role is filled by His-37. Gln-61 is a (R)-pantoate binding site. Gln-61 serves as a coordination point for beta-alanine. 147–150 is an ATP binding site; it reads GQKD. Gln-153 contacts (R)-pantoate. Residues Val-176 and 184 to 187 contribute to the ATP site; that span reads MSSR.

Belongs to the pantothenate synthetase family. In terms of assembly, homodimer.

The protein resides in the cytoplasm. The enzyme catalyses (R)-pantoate + beta-alanine + ATP = (R)-pantothenate + AMP + diphosphate + H(+). The protein operates within cofactor biosynthesis; (R)-pantothenate biosynthesis; (R)-pantothenate from (R)-pantoate and beta-alanine: step 1/1. Its function is as follows. Catalyzes the condensation of pantoate with beta-alanine in an ATP-dependent reaction via a pantoyl-adenylate intermediate. This is Pantothenate synthetase from Thermoanaerobacter pseudethanolicus (strain ATCC 33223 / 39E) (Clostridium thermohydrosulfuricum).